Reading from the N-terminus, the 606-residue chain is Endonuclease 8-like 3 (606 aa).

V2 (schiff-base intermediate with DNA; via amino nitrogen) is an active-site residue. The tract at residues 31 to 51 is disordered; the sequence is ALQGLGGPGSPPAAPGPMGTS. Residues N194 and R273 each coordinate DNA. The FPG-type zinc-finger motif lies at 249 to 283; that stretch reads KVYKRPNCGQCCCKITVCRLGENNRMTYFCPHCQK. The segment at 319-348 adopts a RanBP2-type zinc-finger fold; that stretch reads SEEQWTCEVCTLINKLSSKTCDACLTSRPA. S451 is modified (phosphoserine). Positions 508, 511, 534, 542, 555, 557, 580, and 588 each coordinate Zn(2+). 2 GRF-type zinc fingers span residues 508-551 and 555-597; these read CSKH…ADLS and CNHG…AQNG.

Belongs to the FPG family.

Its subcellular location is the nucleus. It is found in the chromosome. It catalyses the reaction 2'-deoxyribonucleotide-(2'-deoxyribose 5'-phosphate)-2'-deoxyribonucleotide-DNA = a 3'-end 2'-deoxyribonucleotide-(2,3-dehydro-2,3-deoxyribose 5'-phosphate)-DNA + a 5'-end 5'-phospho-2'-deoxyribonucleoside-DNA + H(+). In terms of biological role, DNA glycosylase which prefers single-stranded DNA (ssDNA), or partially ssDNA structures such as bubble and fork structures, to double-stranded DNA (dsDNA). Mediates interstrand cross-link repair in response to replication stress: acts by mediating DNA glycosylase activity, cleaving one of the two N-glycosyl bonds comprising the interstrand cross-link, which avoids the formation of a double-strand break but generates an abasic site that is bypassed by translesion synthesis polymerases. In vitro, displays strong glycosylase activity towards the hydantoin lesions spiroiminodihydantoin (Sp) and guanidinohydantoin (Gh) in both ssDNA and dsDNA; also recognizes FapyA, FapyG, 5-OHU, 5-OHC, 5-OHMH, Tg and 8-oxoA lesions in ssDNA. No activity on 8-oxoG detected. Also shows weak DNA-(apurinic or apyrimidinic site) lyase activity. In vivo, appears to be the primary enzyme involved in removing Sp and Gh from ssDNA in neonatal tissues. This Bos taurus (Bovine) protein is Endonuclease 8-like 3 (NEIL3).